The following is a 280-amino-acid chain: Protoheme IX farnesyltransferase (280 aa).

9 helical membrane-spanning segments follow: residues 2-21 (VVAT…RAGL), 30-50 (AAVP…VVSG), 83-103 (LALW…LVGV), 105-125 (ATTG…YTPL), 131-151 (LSLP…WTSV), 160-180 (FLLF…ISLF), 206-226 (IVGY…LGVA), 229-249 (VYLG…VYGL), and 260-280 (QVFF…MIGA).

It belongs to the UbiA prenyltransferase family. Protoheme IX farnesyltransferase subfamily.

The protein localises to the cell inner membrane. The enzyme catalyses heme b + (2E,6E)-farnesyl diphosphate + H2O = Fe(II)-heme o + diphosphate. The protein operates within porphyrin-containing compound metabolism; heme O biosynthesis; heme O from protoheme: step 1/1. In terms of biological role, converts heme B (protoheme IX) to heme O by substitution of the vinyl group on carbon 2 of heme B porphyrin ring with a hydroxyethyl farnesyl side group. The sequence is that of Protoheme IX farnesyltransferase from Sorangium cellulosum (strain So ce56) (Polyangium cellulosum (strain So ce56)).